The following is a 385-amino-acid chain: Cell division protein FtsZ (385 aa).

GTP-binding positions include 20–24 (GGGGN), 107–109 (GTG), Glu-138, Arg-142, and Asn-186.

Belongs to the FtsZ family. In terms of assembly, homodimer. Polymerizes to form a dynamic ring structure in a strictly GTP-dependent manner. Interacts directly with several other division proteins.

It is found in the cytoplasm. Functionally, essential cell division protein that forms a contractile ring structure (Z ring) at the future cell division site. The regulation of the ring assembly controls the timing and the location of cell division. One of the functions of the FtsZ ring is to recruit other cell division proteins to the septum to produce a new cell wall between the dividing cells. Binds GTP and shows GTPase activity. In Buchnera aphidicola subsp. Baizongia pistaciae (strain Bp), this protein is Cell division protein FtsZ.